The chain runs to 648 residues: Wilms tumor protein 1-interacting protein homolog (648 aa).

3 disordered regions span residues aspartate 27 to serine 56, serine 142 to serine 291, and serine 306 to serine 327. 2 stretches are compositionally biased toward low complexity: residues serine 158–aspartate 171 and proline 178–proline 192. 2 stretches are compositionally biased toward polar residues: residues glycine 197–aspartate 213 and proline 220–isoleucine 241. Residues proline 252 to arginine 267 show a composition bias toward low complexity. LIM zinc-binding domains follow at residues glycine 437–glutamine 498, glutamate 502–alanine 561, and proline 562–threonine 631.

The protein belongs to the zyxin/ajuba family.

It is found in the cell junction. The protein localises to the adherens junction. Its subcellular location is the nucleus. In terms of biological role, may monitor slit diaphragm protein assembly, a specialized adherens junction characteristic of podocytes. In case of podocyte injury, it shuttles into the nucleus and acts as a transcription regulator. Plays a role in the regulation of cell morphology and cytoskeletal organization. Acts as a transcriptional corepressor for snai1 and snai2/slug and plays a role in regulating neural crest development. The chain is Wilms tumor protein 1-interacting protein homolog (wtip) from Danio rerio (Zebrafish).